The following is a 468-amino-acid chain: 3-isopropylmalate dehydratase large subunit (468 aa).

Residues Cys349, Cys409, and Cys412 each coordinate [4Fe-4S] cluster.

Belongs to the aconitase/IPM isomerase family. LeuC type 1 subfamily. In terms of assembly, heterodimer of LeuC and LeuD. It depends on [4Fe-4S] cluster as a cofactor.

The catalysed reaction is (2R,3S)-3-isopropylmalate = (2S)-2-isopropylmalate. It participates in amino-acid biosynthesis; L-leucine biosynthesis; L-leucine from 3-methyl-2-oxobutanoate: step 2/4. In terms of biological role, catalyzes the isomerization between 2-isopropylmalate and 3-isopropylmalate, via the formation of 2-isopropylmaleate. The chain is 3-isopropylmalate dehydratase large subunit from Shewanella baltica (strain OS155 / ATCC BAA-1091).